Consider the following 294-residue polypeptide: Uracil-DNA glycosylase (294 aa).

Aspartate 139 acts as the Proton acceptor in catalysis.

This sequence belongs to the uracil-DNA glycosylase (UDG) superfamily. UNG family.

The protein resides in the host nucleus. The enzyme catalyses Hydrolyzes single-stranded DNA or mismatched double-stranded DNA and polynucleotides, releasing free uracil.. Its function is as follows. Excises uracil residues from the DNA which can arise as a result of misincorporation of dUMP residues by DNA polymerase or deamination of cytosines. Therefore may reduce deleterious uracil incorporation into the viral genome, particularly in terminally differentiated cells which lack DNA repair enzymes. The sequence is that of Uracil-DNA glycosylase (UL2) from Human herpesvirus 2 (strain 333) (HHV-2).